We begin with the raw amino-acid sequence, 125 residues long: Small ribosomal subunit protein uS12m (125 aa).

Residues 1-50 (MPSLNQLIRHGREEKRRTDRTRALDQCPQKQGVCPRVSTRTPKKPNSAPR) are disordered. Residues 10–23 (HGREEKRRTDRTRA) show a composition bias toward basic and acidic residues.

This sequence belongs to the universal ribosomal protein uS12 family.

It localises to the mitochondrion. Functionally, protein S12 is involved in the translation initiation step. In Petunia hybrida (Petunia), this protein is Small ribosomal subunit protein uS12m (RPS12).